We begin with the raw amino-acid sequence, 487 residues long: Protein nucleotidyltransferase YdiU (487 aa).

ATP is bound by residues Gly90, Gly92, Arg93, Lys113, Asp125, Gly126, Arg176, and Arg183. Asp252 serves as the catalytic Proton acceptor. 2 residues coordinate Mg(2+): Asn253 and Asp262. ATP is bound at residue Asp262.

The protein belongs to the SELO family. The cofactor is Mg(2+). It depends on Mn(2+) as a cofactor.

It carries out the reaction L-seryl-[protein] + ATP = 3-O-(5'-adenylyl)-L-seryl-[protein] + diphosphate. It catalyses the reaction L-threonyl-[protein] + ATP = 3-O-(5'-adenylyl)-L-threonyl-[protein] + diphosphate. The catalysed reaction is L-tyrosyl-[protein] + ATP = O-(5'-adenylyl)-L-tyrosyl-[protein] + diphosphate. The enzyme catalyses L-histidyl-[protein] + UTP = N(tele)-(5'-uridylyl)-L-histidyl-[protein] + diphosphate. It carries out the reaction L-seryl-[protein] + UTP = O-(5'-uridylyl)-L-seryl-[protein] + diphosphate. It catalyses the reaction L-tyrosyl-[protein] + UTP = O-(5'-uridylyl)-L-tyrosyl-[protein] + diphosphate. In terms of biological role, nucleotidyltransferase involved in the post-translational modification of proteins. It can catalyze the addition of adenosine monophosphate (AMP) or uridine monophosphate (UMP) to a protein, resulting in modifications known as AMPylation and UMPylation. This chain is Protein nucleotidyltransferase YdiU, found in Azotobacter vinelandii (strain DJ / ATCC BAA-1303).